The chain runs to 376 residues: D-alanine--D-alanine ligase (376 aa).

One can recognise an ATP-grasp domain in the interval 155 to 361 (KIIFEKAGIP…YPELIEKLID (207 aa)). 188–243 (EEKFSYPVFVKPSNAGSSVGVSKAHDKNELKEALIYAARYDRKVLIEEFINGREVE) provides a ligand contact to ATP. Positions 314, 328, and 330 each coordinate Mg(2+).

It belongs to the D-alanine--D-alanine ligase family. The cofactor is Mg(2+). Requires Mn(2+) as cofactor.

It is found in the cytoplasm. It catalyses the reaction 2 D-alanine + ATP = D-alanyl-D-alanine + ADP + phosphate + H(+). The protein operates within cell wall biogenesis; peptidoglycan biosynthesis. Functionally, cell wall formation. The chain is D-alanine--D-alanine ligase from Acetivibrio thermocellus (strain ATCC 27405 / DSM 1237 / JCM 9322 / NBRC 103400 / NCIMB 10682 / NRRL B-4536 / VPI 7372) (Clostridium thermocellum).